The chain runs to 156 residues: ATP synthase subunit b (156 aa).

Residues 7–27 (LIGQTVAFIIFVWFCMKFVWP) form a helical membrane-spanning segment.

It belongs to the ATPase B chain family. In terms of assembly, F-type ATPases have 2 components, F(1) - the catalytic core - and F(0) - the membrane proton channel. F(1) has five subunits: alpha(3), beta(3), gamma(1), delta(1), epsilon(1). F(0) has three main subunits: a(1), b(2) and c(10-14). The alpha and beta chains form an alternating ring which encloses part of the gamma chain. F(1) is attached to F(0) by a central stalk formed by the gamma and epsilon chains, while a peripheral stalk is formed by the delta and b chains.

The protein resides in the cell inner membrane. In terms of biological role, f(1)F(0) ATP synthase produces ATP from ADP in the presence of a proton or sodium gradient. F-type ATPases consist of two structural domains, F(1) containing the extramembraneous catalytic core and F(0) containing the membrane proton channel, linked together by a central stalk and a peripheral stalk. During catalysis, ATP synthesis in the catalytic domain of F(1) is coupled via a rotary mechanism of the central stalk subunits to proton translocation. Functionally, component of the F(0) channel, it forms part of the peripheral stalk, linking F(1) to F(0). The chain is ATP synthase subunit b from Shewanella oneidensis (strain ATCC 700550 / JCM 31522 / CIP 106686 / LMG 19005 / NCIMB 14063 / MR-1).